The chain runs to 147 residues: NAD(P)H-quinone oxidoreductase subunit N (147 aa).

The protein belongs to the complex I NdhN subunit family. NDH-1 can be composed of about 15 different subunits; different subcomplexes with different compositions have been identified which probably have different functions.

The protein localises to the cellular thylakoid membrane. The catalysed reaction is a plastoquinone + NADH + (n+1) H(+)(in) = a plastoquinol + NAD(+) + n H(+)(out). It carries out the reaction a plastoquinone + NADPH + (n+1) H(+)(in) = a plastoquinol + NADP(+) + n H(+)(out). In terms of biological role, NDH-1 shuttles electrons from an unknown electron donor, via FMN and iron-sulfur (Fe-S) centers, to quinones in the respiratory and/or the photosynthetic chain. The immediate electron acceptor for the enzyme in this species is believed to be plastoquinone. Couples the redox reaction to proton translocation, and thus conserves the redox energy in a proton gradient. Cyanobacterial NDH-1 also plays a role in inorganic carbon-concentration. In Synechococcus sp. (strain JA-2-3B'a(2-13)) (Cyanobacteria bacterium Yellowstone B-Prime), this protein is NAD(P)H-quinone oxidoreductase subunit N.